Consider the following 414-residue polypeptide: Serine hydroxymethyltransferase (414 aa).

Residues leucine 116 and 120 to 122 each bind (6S)-5,6,7,8-tetrahydrofolate; that span reads GHL. Position 224 is an N6-(pyridoxal phosphate)lysine (lysine 224). Residues glutamate 240 and 348 to 350 contribute to the (6S)-5,6,7,8-tetrahydrofolate site; that span reads SPF.

This sequence belongs to the SHMT family. Homodimer. Pyridoxal 5'-phosphate is required as a cofactor.

The protein resides in the cytoplasm. It carries out the reaction (6R)-5,10-methylene-5,6,7,8-tetrahydrofolate + glycine + H2O = (6S)-5,6,7,8-tetrahydrofolate + L-serine. Its pathway is one-carbon metabolism; tetrahydrofolate interconversion. The protein operates within amino-acid biosynthesis; glycine biosynthesis; glycine from L-serine: step 1/1. Catalyzes the reversible interconversion of serine and glycine with tetrahydrofolate (THF) serving as the one-carbon carrier. This reaction serves as the major source of one-carbon groups required for the biosynthesis of purines, thymidylate, methionine, and other important biomolecules. Also exhibits THF-independent aldolase activity toward beta-hydroxyamino acids, producing glycine and aldehydes, via a retro-aldol mechanism. The protein is Serine hydroxymethyltransferase of Campylobacter jejuni subsp. jejuni serotype O:23/36 (strain 81-176).